The primary structure comprises 338 residues: Acyl-CoA-binding domain-containing protein 1 (338 aa).

Residues 11–31 (IIFGLIFAYLLAKLISILLAF) form a helical; Signal-anchor membrane-spanning segment. N-linked (GlcNAc...) asparagine glycans are attached at residues N35 and N41. The interval 69–89 (AEQGSLRGDEDESDDDDWEGV) is disordered. Residues 77–89 (DEDESDDDDWEGV) show a composition bias toward acidic residues. The region spanning 94–184 (LDEAFSAATA…VTQLYPAWVE (91 aa)) is the ACB domain. An acyl-CoA contacts are provided by residues 126 to 130 (YGLYK), K152, and Y171. An N-linked (GlcNAc...) asparagine glycan is attached at N191. 4 ANK repeats span residues 217 to 246 (LKIDAIHAFAREGEVENLLKCIENGIPVNA), 250 to 279 (EGRTPLHWAIDRGHLNVAEALVDKNADVNA), 283 to 312 (EGQTSLHYAVVCEREALAEFLVKQKADTTI), and 316 to 338 (DGNSPLDLCESEWSWMREKKDSN).

Belongs to the ACBP family. As to quaternary structure, interacts with RAP2-12. Binds to SMO1-1 and SMO1-2. Glycosylated. In seeds, localized in the outer integument. Expressed at low levels in roots, stems, leaves, flowers, and siliques, especially within seeds.

Its subcellular location is the cell membrane. It localises to the secreted. The protein resides in the cell wall. The protein localises to the endoplasmic reticulum membrane. In terms of biological role, binds medium- and long-chain acyl-CoA esters with very high affinity. Can interact in vitro with arachidonyl-CoA, barely with oleoyl-CoA, but not with palmitoyl-CoA. Confers tolerance and binds to lead ions Pb(2+), probably by promoting lead translocation from roots to shoots. May function as an intracellular carrier of acyl-CoA esters. Modulates negatively sterol synthesis during embryogenesis and gametophytes development via interactions with SMO1-1 and SMO1-2; sterols serve as lipid modulators for gene expression of homeodomain-leucine zipper IV transcription factors. In Arabidopsis thaliana (Mouse-ear cress), this protein is Acyl-CoA-binding domain-containing protein 1.